The sequence spans 324 residues: 2-dehydro-3-deoxygluconokinase (324 aa).

Substrate contacts are provided by residues 35 to 39, 106 to 108, and R170; these read GAESN and YYR. ATP is bound by residues 168–170, 228–233, and 258–261; these read NVR, KLGKEG, and GAGD. Substrate is bound by residues D261 and D297. D261 (proton acceptor) is an active-site residue.

Belongs to the carbohydrate kinase PfkB family.

The enzyme catalyses 2-dehydro-3-deoxy-D-gluconate + ATP = 2-dehydro-3-deoxy-6-phospho-D-gluconate + ADP + H(+). Its pathway is carbohydrate acid metabolism; 2-dehydro-3-deoxy-D-gluconate degradation; D-glyceraldehyde 3-phosphate and pyruvate from 2-dehydro-3-deoxy-D-gluconate: step 1/2. Functionally, catalyzes the phosphorylation of 2-keto-3-deoxygluconate (KDG) to produce 2-keto-3-deoxy-6-phosphogluconate (KDPG). The polypeptide is 2-dehydro-3-deoxygluconokinase (kdgK) (Bacillus subtilis (strain 168)).